We begin with the raw amino-acid sequence, 140 residues long: 3-hydroxyacyl-[acyl-carrier-protein] dehydratase FabZ (140 aa).

The active site involves His-47.

The protein belongs to the thioester dehydratase family. FabZ subfamily.

The protein localises to the cytoplasm. The catalysed reaction is a (3R)-hydroxyacyl-[ACP] = a (2E)-enoyl-[ACP] + H2O. In terms of biological role, involved in unsaturated fatty acids biosynthesis. Catalyzes the dehydration of short chain beta-hydroxyacyl-ACPs and long chain saturated and unsaturated beta-hydroxyacyl-ACPs. This Streptococcus pneumoniae (strain CGSP14) protein is 3-hydroxyacyl-[acyl-carrier-protein] dehydratase FabZ.